The following is a 261-amino-acid chain: uncharacterized protein (261 aa).

A signal peptide spans 1-22 (MKSIKRIGLCISLLILIIFVTS). Cys23 carries N-palmitoyl cysteine lipidation. Residue Cys23 is the site of S-diacylglycerol cysteine attachment.

Belongs to the staphylococcal tandem lipoprotein family.

The protein localises to the cell membrane. This is an uncharacterized protein from Staphylococcus aureus (strain USA300).